A 633-amino-acid polypeptide reads, in one-letter code: Extracellular metalloproteinase 3 (633 aa).

Residues 1–18 (MHGLLLAGLLALPMNVLA) form the signal peptide. A propeptide spanning residues 19–246 (HPAEQQTSSV…VHNVVDYVAS (228 aa)) is cleaved from the precursor. N-linked (GlcNAc...) asparagine glycosylation is present at Asn-410. Residue His-429 coordinates Zn(2+). The active site involves Glu-430. Residue His-433 participates in Zn(2+) binding. Asn-480 is a glycosylation site (N-linked (GlcNAc...) asparagine).

Belongs to the peptidase M36 family. It depends on Zn(2+) as a cofactor.

It is found in the secreted. In terms of biological role, secreted metalloproteinase probably acting as a virulence factor. The chain is Extracellular metalloproteinase 3 (MEP3) from Arthroderma otae (Microsporum canis).